The chain runs to 277 residues: Undecaprenyl-diphosphatase (277 aa).

The next 6 helical transmembrane spans lie at 47–67 (FNIIIQLAAILAVVWEFRGKI), 85–105 (VNLLIAFFPAVILGVLFADLI), 108–128 (WLFNPITVALALVVGGVIMLW), 183–203 (AATEFSFFLAMPTMVGAAVYS), 218–238 (VFAVGFVTSFVFAMVAVRALL), and 249–269 (FAWYRIAFGLLILATWQFHLI).

It belongs to the UppP family.

The protein resides in the cell inner membrane. The catalysed reaction is di-trans,octa-cis-undecaprenyl diphosphate + H2O = di-trans,octa-cis-undecaprenyl phosphate + phosphate + H(+). Catalyzes the dephosphorylation of undecaprenyl diphosphate (UPP). Confers resistance to bacitracin. This chain is Undecaprenyl-diphosphatase, found in Pseudomonas paraeruginosa (strain DSM 24068 / PA7) (Pseudomonas aeruginosa (strain PA7)).